The primary structure comprises 257 residues: MLFLLSPAKKLDYDTPVQAQTYTQPLFVEQAAALIKVLKTKSADEIAGLMSLSQALAELNVGRYAAWKKTFTLDNARQAVLAFNGDVYEGLEAPSLSASQLDWAQEHVVILSGLYGALRPLDLMQPYRLEMGTRLETPKGKNLYEYWGSTIAAYLNERQEGEGAPCIINLASEEYFKAVDLKTLKARVVQCVFQDWKGGAWKIISFHAKRARGLMVRYAIEHRAKTSEALQAFDREGYVFDASASSADKLVFRRRLD.

This sequence belongs to the UPF0246 family.

The sequence is that of UPF0246 protein BAV2675 from Bordetella avium (strain 197N).